Reading from the N-terminus, the 251-residue chain is Orcokinin peptides type A (251 aa).

Positions Met1–Ala20 are cleaved as a signal peptide. Propeptides lie at residues Gly21 to Val46, Asp225 to Asp231, and Asn249 to Glu251.

The protein belongs to the orcokinin family.

It is found in the secreted. In terms of biological role, myotropic peptides that enhance both the frequency and amplitude of spontaneous hindgut contractions. This chain is Orcokinin peptides type A, found in Procambarus clarkii (Red swamp crayfish).